We begin with the raw amino-acid sequence, 313 residues long: tRNA dimethylallyltransferase (313 aa).

Position 10–17 (10–17 (GPTASGKT)) interacts with ATP. Substrate is bound at residue 12–17 (TASGKT). Interaction with substrate tRNA stretches follow at residues 35-38 (DSAM), 159-163 (QRIQR), and 240-245 (RCVGYR).

This sequence belongs to the IPP transferase family. As to quaternary structure, monomer. Mg(2+) is required as a cofactor.

The enzyme catalyses adenosine(37) in tRNA + dimethylallyl diphosphate = N(6)-dimethylallyladenosine(37) in tRNA + diphosphate. Its function is as follows. Catalyzes the transfer of a dimethylallyl group onto the adenine at position 37 in tRNAs that read codons beginning with uridine, leading to the formation of N6-(dimethylallyl)adenosine (i(6)A). This Legionella pneumophila (strain Lens) protein is tRNA dimethylallyltransferase.